The primary structure comprises 321 residues: NADH-ubiquinone oxidoreductase chain 1 (321 aa).

8 helical membrane passes run 5–25 (LVTLNSLMYIIPILIAVAFLT), 74–94 (LLILSPLLAITAAMLIWAPIP), 104–124 (LGLLSILAISGMAVNSILWAG), 151–171 (GIILLSTLVLTGGFTIQLLTI), 175–195 (YTWLLTTSWPLTMMWFISTLA), 227–247 (FFLAEYANIITMNLLTCILFI), 256–276 (ELFLANLIAKTTILCLSFLWI), and 296–316 (FLPMTMALCLLHASLSISISG).

The protein belongs to the complex I subunit 1 family.

It localises to the mitochondrion inner membrane. It carries out the reaction a ubiquinone + NADH + 5 H(+)(in) = a ubiquinol + NAD(+) + 4 H(+)(out). In terms of biological role, core subunit of the mitochondrial membrane respiratory chain NADH dehydrogenase (Complex I) that is believed to belong to the minimal assembly required for catalysis. Complex I functions in the transfer of electrons from NADH to the respiratory chain. The immediate electron acceptor for the enzyme is believed to be ubiquinone. This chain is NADH-ubiquinone oxidoreductase chain 1 (MT-ND1), found in Varanus baritji (Black-spotted ridge-tailed monitor).